A 492-amino-acid polypeptide reads, in one-letter code: Malonyl-CoA decarboxylase, mitochondrial (492 aa).

Residues Met1 to Arg28 form a disordered region. The N-terminal 38 residues, Met1–Ala38, are a transit peptide targeting the mitochondrion. Residues Met39 to Phe189 form an alpha-helical domain region. Position 58 is an N6-acetyllysine (Lys58). Lys167 bears the N6-acetyllysine; alternate mark. Lys167 carries the post-translational modification N6-succinyllysine; alternate. Residues Ser190–Leu492 are catalytic domain. Position 210 is an N6-acetyllysine (Lys210). Residue Lys221 is modified to N6-succinyllysine. Position 298–304 (Gln298–Thr304) interacts with malonyl-CoA. The residue at position 316 (Lys316) is an N6-acetyllysine. Ser328 contacts malonyl-CoA. Residue Ser328 is the Proton acceptor of the active site. Lys385 carries the N6-acetyllysine; alternate modification. Lys385 is modified (N6-succinyllysine; alternate). Lys388 carries the N6-acetyllysine modification. His422 provides a ligand contact to malonyl-CoA. His422 acts as the Proton donor in catalysis. 2 positions are modified to N6-acetyllysine: Lys441 and Lys471. The Microbody targeting signal signature appears at Ser490–Leu492.

As to quaternary structure, homotetramer. Dimer of dimers. The two subunits within a dimer display conformational differences suggesting that at any given moment, only one of the two subunits is competent for malonyl-CoA binding and catalytic activity. Under oxidizing conditions, can form disulfide-linked homotetramers (in vitro). Associates with the peroxisomal targeting signal receptor PEX5. Interchain disulfide bonds may form in peroxisomes (Potential). Interchain disulfide bonds are not expected to form in the reducing environment of the cytoplasm and mitochondria. In terms of processing, acetylation at Lys-471 activates malonyl-CoA decarboxylase activity. Deacetylation at Lys-471 by SIRT4 represses activity, leading to promote lipogenesis.

The protein localises to the cytoplasm. The protein resides in the mitochondrion matrix. It is found in the peroxisome. It localises to the peroxisome matrix. It catalyses the reaction malonyl-CoA + H(+) = acetyl-CoA + CO2. It functions in the pathway metabolic intermediate biosynthesis; acetyl-CoA biosynthesis; acetyl-CoA from malonyl-CoA: step 1/1. Malonyl-CoA decarboxylase activity does not require any cofactors or divalent metal ions. Its function is as follows. Catalyzes the conversion of malonyl-CoA to acetyl-CoA. In the fatty acid biosynthesis MCD selectively removes malonyl-CoA and thus assures that methyl-malonyl-CoA is the only chain elongating substrate for fatty acid synthase and that fatty acids with multiple methyl side chains are produced. In peroxisomes it may be involved in degrading intraperoxisomal malonyl-CoA, which is generated by the peroxisomal beta-oxidation of odd chain-length dicarboxylic fatty acids. Plays a role in the metabolic balance between glucose and lipid oxidation in muscle independent of alterations in insulin signaling. Plays a role in controlling the extent of ischemic injury by promoting glucose oxidation. The polypeptide is Malonyl-CoA decarboxylase, mitochondrial (Mus musculus (Mouse)).